Reading from the N-terminus, the 147-residue chain is Large ribosomal subunit protein uL22 (147 aa).

This sequence belongs to the universal ribosomal protein uL22 family. In terms of assembly, part of the 50S ribosomal subunit.

This protein binds specifically to 23S rRNA; its binding is stimulated by other ribosomal proteins, e.g. L4, L17, and L20. It is important during the early stages of 50S assembly. It makes multiple contacts with different domains of the 23S rRNA in the assembled 50S subunit and ribosome. Its function is as follows. The globular domain of the protein is located near the polypeptide exit tunnel on the outside of the subunit, while an extended beta-hairpin is found that lines the wall of the exit tunnel in the center of the 70S ribosome. In Fervidobacterium nodosum (strain ATCC 35602 / DSM 5306 / Rt17-B1), this protein is Large ribosomal subunit protein uL22.